The chain runs to 489 residues: uncharacterized protein (489 aa).

Disordered regions lie at residues 1-94, 109-229, 300-389, and 428-461; these read MIEE…GSLD, NRNQ…SDDD, DDNI…TSIQ, and SESG…TLVK. Composition is skewed to low complexity over residues 43 to 53 and 64 to 77; these read LLVQQSNQSVK and SNGF…NIHD. The segment covering 121–138 has biased composition (acidic residues); that stretch reads NFSEDDEDDDAEDDDSSD. The segment covering 144-154 has biased composition (basic residues); sequence KKNKPKKPSKL. Residues 155 to 164 are compositionally biased toward basic and acidic residues; the sequence is MKHDSVDGKN. Residues 173 to 199 show a composition bias toward basic residues; it reads SKKKVQHQLKEKNKKKGIKNDKKKSKP. A compositionally biased stretch (acidic residues) spans 308 to 343; sequence NDNDNDNDDDNDNDNDNDNDNDNDNDDDENGEDNGE. Composition is skewed to low complexity over residues 344 to 389 and 433 to 449; these read DLNI…TSIQ and SISS…SSKS.

This is an uncharacterized protein from Dictyostelium discoideum (Social amoeba).